The following is a 137-amino-acid chain: Phosphoribosyl-AMP cyclohydrolase (137 aa).

A Mg(2+)-binding site is contributed by aspartate 84. Cysteine 85 is a Zn(2+) binding site. Mg(2+)-binding residues include aspartate 86 and aspartate 88. Residues cysteine 101 and cysteine 108 each coordinate Zn(2+).

The protein belongs to the PRA-CH family. As to quaternary structure, homodimer. Mg(2+) serves as cofactor. Requires Zn(2+) as cofactor.

Its subcellular location is the cytoplasm. The catalysed reaction is 1-(5-phospho-beta-D-ribosyl)-5'-AMP + H2O = 1-(5-phospho-beta-D-ribosyl)-5-[(5-phospho-beta-D-ribosylamino)methylideneamino]imidazole-4-carboxamide. The protein operates within amino-acid biosynthesis; L-histidine biosynthesis; L-histidine from 5-phospho-alpha-D-ribose 1-diphosphate: step 3/9. Functionally, catalyzes the hydrolysis of the adenine ring of phosphoribosyl-AMP. This chain is Phosphoribosyl-AMP cyclohydrolase, found in Prosthecochloris aestuarii (strain DSM 271 / SK 413).